Reading from the N-terminus, the 266-residue chain is NAD kinase 1 (266 aa).

Catalysis depends on D45, which acts as the Proton acceptor. NAD(+) is bound by residues 45 to 46 (DG), 122 to 123 (NE), and R148. ATP is bound at residue D150. NAD(+) contacts are provided by residues S158 and 161 to 166 (TAYNKA).

The protein belongs to the NAD kinase family. Homodimer. Ca(2+) is required as a cofactor. Mn(2+) serves as cofactor.

It is found in the cytoplasm. The catalysed reaction is NAD(+) + ATP = ADP + NADP(+) + H(+). With respect to regulation, allosterically inhibited by NADP and activated by quinolinic acid. Strongly inhibited by HgCl(2). Involved in the regulation of the intracellular balance of NAD and NADP, and is a key enzyme in the biosynthesis of NADP. Catalyzes specifically the phosphorylation on 2'-hydroxyl of the adenosine moiety of NAD to yield NADP. It can use ATP and other nucleoside triphosphates (GTP, UTP) as well as inorganic polyphosphate (poly(P)) as a source of phosphorus. The sequence is that of NAD kinase 1 (ppnKA) from Bacillus subtilis (strain 168).